A 329-amino-acid polypeptide reads, in one-letter code: Malate dehydrogenase (329 aa).

NAD(+) is bound at residue 12 to 18 (GAAGQIG). Positions 93 and 99 each coordinate substrate. NAD(+) is bound by residues N106, Q113, and 130–132 (TGN). Substrate contacts are provided by N132 and R163. The active-site Proton acceptor is the H188.

This sequence belongs to the LDH/MDH superfamily. MDH type 2 family.

It carries out the reaction (S)-malate + NAD(+) = oxaloacetate + NADH + H(+). In terms of biological role, catalyzes the reversible oxidation of malate to oxaloacetate. The protein is Malate dehydrogenase of Mycobacterium avium (strain 104).